Reading from the N-terminus, the 85-residue chain is Small ribosomal subunit protein bS18 (85 aa).

This sequence belongs to the bacterial ribosomal protein bS18 family. Part of the 30S ribosomal subunit. Forms a tight heterodimer with protein bS6.

Binds as a heterodimer with protein bS6 to the central domain of the 16S rRNA, where it helps stabilize the platform of the 30S subunit. The polypeptide is Small ribosomal subunit protein bS18 (Hamiltonella defensa subsp. Acyrthosiphon pisum (strain 5AT)).